The primary structure comprises 1221 residues: DNA topoisomerase 2 (1221 aa).

Residues Asn65, Asn94, 122–124 (SSN), 135–142 (GRHGYGAK), and 352–354 (QNK) contribute to the ATP site. Residues 432–546 (RTLIVTEGDS…SLLVRNPGFI (115 aa)) form the Toprim domain. Residues Glu438, Asp515, and Asp517 each contribute to the Mg(2+) site. Residues 681-1097 (LAHSVDGLKP…TPVQLWLGEL (417 aa)) form the Topo IIA-type catalytic domain. The O-(5'-phospho-DNA)-tyrosine intermediate role is filled by Tyr771. The tract at residues 952–961 (GLTQRIHING) is interaction with DNA. The interval 1158–1198 (VPPPTKRGAGGRSDGDGGATAAGAAAAVGGRGEKKGPGRAG) is disordered. Over residues 1165–1177 (GAGGRSDGDGGAT) the composition is skewed to gly residues.

This sequence belongs to the type II topoisomerase family. As to quaternary structure, homodimer. It depends on Mg(2+) as a cofactor. Mn(2+) serves as cofactor. The cofactor is Ca(2+).

It is found in the nucleus. The catalysed reaction is ATP-dependent breakage, passage and rejoining of double-stranded DNA.. Its function is as follows. Control of topological states of DNA by transient breakage and subsequent rejoining of DNA strands. Topoisomerase II makes double-strand breaks. This is DNA topoisomerase 2 (TOP2) from Trypanosoma brucei brucei.